The primary structure comprises 315 residues: Olfactory receptor 8J3 (315 aa).

Residues 1-25 (MAPENFTRVTEFILTGVSSCPELQI) are Extracellular-facing. Residue Asn-5 is glycosylated (N-linked (GlcNAc...) asparagine). The helical transmembrane segment at 26 to 46 (PLFLVFLVLYVLTMAGNLGII) threads the bilayer. At 47–54 (TLTSVDSR) the chain is on the cytoplasmic side. The helical transmembrane segment at 55-75 (LQNPMYFFLRHLAIINLGNST) threads the bilayer. Residues 76–99 (VIAPKMLMNFLVKKKTTSFYECAT) are Extracellular-facing. Cys-97 and Cys-189 are joined by a disulfide. The helical transmembrane segment at 100 to 120 (QLGGFLFFIVSEVMMLAVMAY) threads the bilayer. Residues 121-139 (DRYVAICNPLLYMVVVSRR) are Cytoplasmic-facing. A helical membrane pass occupies residues 140–160 (LCLLLVSLTYLYGFSTAIVVS). Topologically, residues 161–197 (PCIFSVSYCSSNIINHFYCDIAPLLALSCSDTYIPET) are extracellular. The chain crosses the membrane as a helical span at residues 198–217 (IVFISAATNLVFSMITVLVS). At 218–237 (YFNIVLSILRIRSPEGRKKA) the chain is on the cytoplasmic side. A helical membrane pass occupies residues 238-258 (FSTCASHMIAVTVFYGTMLFM). Topologically, residues 259–271 (YLQPQTNHSLDTD) are extracellular. N-linked (GlcNAc...) asparagine glycosylation is present at Asn-265. The helical transmembrane segment at 272-292 (KMASVFYTLVIPMLNPLIYSL) threads the bilayer. At 293–315 (RNNDVNVALKKFMENPCYSFKSM) the chain is on the cytoplasmic side.

Belongs to the G-protein coupled receptor 1 family.

It is found in the cell membrane. Its function is as follows. Odorant receptor. The protein is Olfactory receptor 8J3 (OR8J3) of Homo sapiens (Human).